A 122-amino-acid polypeptide reads, in one-letter code: Large ribosomal subunit protein uL18 (122 aa).

It belongs to the universal ribosomal protein uL18 family. Part of the 50S ribosomal subunit; part of the 5S rRNA/L5/L18/L25 subcomplex. Contacts the 5S and 23S rRNAs.

This is one of the proteins that bind and probably mediate the attachment of the 5S RNA into the large ribosomal subunit, where it forms part of the central protuberance. The chain is Large ribosomal subunit protein uL18 from Geotalea uraniireducens (strain Rf4) (Geobacter uraniireducens).